We begin with the raw amino-acid sequence, 201 residues long: Peptidyl-tRNA hydrolase (201 aa).

Y15 is a binding site for tRNA. The Proton acceptor role is filled by H20. TRNA-binding residues include Y66, N68, and N114.

The protein belongs to the PTH family. In terms of assembly, monomer.

The protein resides in the cytoplasm. The enzyme catalyses an N-acyl-L-alpha-aminoacyl-tRNA + H2O = an N-acyl-L-amino acid + a tRNA + H(+). Functionally, hydrolyzes ribosome-free peptidyl-tRNAs (with 1 or more amino acids incorporated), which drop off the ribosome during protein synthesis, or as a result of ribosome stalling. In terms of biological role, catalyzes the release of premature peptidyl moieties from peptidyl-tRNA molecules trapped in stalled 50S ribosomal subunits, and thus maintains levels of free tRNAs and 50S ribosomes. The protein is Peptidyl-tRNA hydrolase of Burkholderia thailandensis (strain ATCC 700388 / DSM 13276 / CCUG 48851 / CIP 106301 / E264).